The sequence spans 706 residues: Elongation factor G (706 aa).

A tr-type G domain is found at 8-290 (KRYRNIGIVA…GVIEYMPSPT (283 aa)). Residues 17-24 (AHVDAGKT), 88-92 (DTPGH), and 142-145 (NKMD) each bind GTP.

This sequence belongs to the TRAFAC class translation factor GTPase superfamily. Classic translation factor GTPase family. EF-G/EF-2 subfamily.

The protein localises to the cytoplasm. Functionally, catalyzes the GTP-dependent ribosomal translocation step during translation elongation. During this step, the ribosome changes from the pre-translocational (PRE) to the post-translocational (POST) state as the newly formed A-site-bound peptidyl-tRNA and P-site-bound deacylated tRNA move to the P and E sites, respectively. Catalyzes the coordinated movement of the two tRNA molecules, the mRNA and conformational changes in the ribosome. The sequence is that of Elongation factor G from Chromohalobacter salexigens (strain ATCC BAA-138 / DSM 3043 / CIP 106854 / NCIMB 13768 / 1H11).